The following is a 681-amino-acid chain: SRSF protein kinase 2 (681 aa).

Positions 1–63 (MSVNSEKSSS…EQEDPADYCK (63 aa)) are disordered. The segment covering 22 to 41 (LVPPPPPPPPPPPLPDPAPP) has biased composition (pro residues). Residues 42 to 59 (EPEEEILGSDDEEQEDPA) show a composition bias toward acidic residues. Ser50 is subject to Phosphoserine. Residues 79–681 (YHVIRKLGWG…ECLRHPWLNS (603 aa)) enclose the Protein kinase domain. ATP is bound by residues 85-93 (LGWGHFSTV) and Lys108. Catalysis depends on Asp212, which acts as the Proton acceptor. Disordered stretches follow at residues 237-270 (WQKAGAPPPSGSAVSTAPQQKPIGKISKNKKKKL), 302-452 (ENIT…PLFS), and 467-499 (GSPLTEQEESSPSHDRSRTVSASSTGDLPKTKT). Phosphothreonine occurs at positions 331 and 332. Ser378 is subject to Phosphoserine. Residues 395–419 (QLEDEEDDEDDCANPEEYNLDEPNA) are compositionally biased toward acidic residues. Over residues 421-431 (SDYTYSSSYEQ) the composition is skewed to polar residues. Ser468 is modified (phosphoserine). Thr471 is subject to Phosphothreonine. A phosphoserine mark is found at Ser477, Ser479, and Ser483. Thr485 carries the post-translational modification Phosphothreonine; by PKB/AKT1. Ser487 and Ser490 each carry phosphoserine. Ser581 carries the post-translational modification Phosphoserine; by CK2.

This sequence belongs to the protein kinase superfamily. CMGC Ser/Thr protein kinase family. In terms of assembly, associates with U4/U6-U5 tri-small nuclear ribonucleoproteins (U4/U6-U5 tri-snRNPs). Interacts with PKB/AKT1 in a phosphorylation-dependent manner. The phosphorylated form (by PKB/AKT1) interacts with YWHAB and YWHAE. Interaction with YWHAB suppresses its cleavage by caspases and inhibits the release of its N-terminal pro-apoptotic fragment. Interacts with SFN. Interacts with ACIN1. Interacts with POLR2A/RNA polymerase II; the interaction occurs during the co-transcriptional formation of inappropriate R-loops. It depends on Mg(2+) as a cofactor. Phosphorylation at Thr-485 by PKB/AKT1 enhances its stimulatory activity in triggering cyclin-D1 (CCND1) expression and promoting apoptosis in neurons, which can be blocked by YWHAB. It also enhances its protein kinase activity toward ACIN1 and SRSF2, promotes its nuclear translocation and prevents its proteolytic cleavage. In terms of processing, proteolytically cleaved at Asp-137 and Asp-401 by caspase-3 during apoptotic cell death. Cleavage at Asp-137 which is the major site of cleavage, produces a small N-terminal fragment that translocates into nucleus and promotes VP16-induced apoptosis. Expressed in testes, lung and brain.

It is found in the cytoplasm. The protein resides in the nucleus. It localises to the nucleoplasm. The protein localises to the nucleus speckle. Its subcellular location is the chromosome. It carries out the reaction L-seryl-[protein] + ATP = O-phospho-L-seryl-[protein] + ADP + H(+). The enzyme catalyses L-threonyl-[protein] + ATP = O-phospho-L-threonyl-[protein] + ADP + H(+). Its activity is regulated as follows. Activated by phosphorylation on Ser-50 and Ser-581. Its function is as follows. Serine/arginine-rich protein-specific kinase which specifically phosphorylates its substrates at serine residues located in regions rich in arginine/serine dipeptides, known as RS domains and is involved in the phosphorylation of SR splicing factors and the regulation of splicing. Promotes neuronal apoptosis by up-regulating cyclin-D1 (CCND1) expression. This is done by the phosphorylation of SRSF2, leading to the suppression of p53/TP53 phosphorylation thereby relieving the repressive effect of p53/TP53 on cyclin-D1 (CCND1) expression. Phosphorylates ACIN1, and redistributes it from the nuclear speckles to the nucleoplasm, resulting in cyclin A1 but not cyclin A2 up-regulation. Plays an essential role in spliceosomal B complex formation via the phosphorylation of DDX23/PRP28. Probably by phosphorylating DDX23, leads to the suppression of incorrect R-loops formed during transcription; R-loops are composed of a DNA:RNA hybrid and the associated non-template single-stranded DNA. In Mus musculus (Mouse), this protein is SRSF protein kinase 2.